The primary structure comprises 72 residues: Translation initiation factor IF-1 (72 aa).

Residues 1–72 (MSKNDVIEVE…TRGRIVYRFK (72 aa)) enclose the S1-like domain.

Belongs to the IF-1 family. Component of the 30S ribosomal translation pre-initiation complex which assembles on the 30S ribosome in the order IF-2 and IF-3, IF-1 and N-formylmethionyl-tRNA(fMet); mRNA recruitment can occur at any time during PIC assembly.

The protein resides in the cytoplasm. Functionally, one of the essential components for the initiation of protein synthesis. Stabilizes the binding of IF-2 and IF-3 on the 30S subunit to which N-formylmethionyl-tRNA(fMet) subsequently binds. Helps modulate mRNA selection, yielding the 30S pre-initiation complex (PIC). Upon addition of the 50S ribosomal subunit IF-1, IF-2 and IF-3 are released leaving the mature 70S translation initiation complex. The sequence is that of Translation initiation factor IF-1 from Desulforamulus reducens (strain ATCC BAA-1160 / DSM 100696 / MI-1) (Desulfotomaculum reducens).